A 320-amino-acid polypeptide reads, in one-letter code: UDP-3-O-acyl-N-acetylglucosamine deacetylase (320 aa).

Residues histidine 92, histidine 251, and aspartate 255 each contribute to the Zn(2+) site. Residue histidine 278 is the Proton donor of the active site.

The protein belongs to the LpxC family. Requires Zn(2+) as cofactor.

It catalyses the reaction a UDP-3-O-[(3R)-3-hydroxyacyl]-N-acetyl-alpha-D-glucosamine + H2O = a UDP-3-O-[(3R)-3-hydroxyacyl]-alpha-D-glucosamine + acetate. It participates in glycolipid biosynthesis; lipid IV(A) biosynthesis; lipid IV(A) from (3R)-3-hydroxytetradecanoyl-[acyl-carrier-protein] and UDP-N-acetyl-alpha-D-glucosamine: step 2/6. Catalyzes the hydrolysis of UDP-3-O-myristoyl-N-acetylglucosamine to form UDP-3-O-myristoylglucosamine and acetate, the committed step in lipid A biosynthesis. The chain is UDP-3-O-acyl-N-acetylglucosamine deacetylase from Psychrobacter cryohalolentis (strain ATCC BAA-1226 / DSM 17306 / VKM B-2378 / K5).